The chain runs to 290 residues: 4-hydroxy-3-methylbut-2-enyl diphosphate reductase (290 aa).

Position 12 (cysteine 12) interacts with [4Fe-4S] cluster. (2E)-4-hydroxy-3-methylbut-2-enyl diphosphate contacts are provided by histidine 50 and histidine 83. Dimethylallyl diphosphate-binding residues include histidine 50 and histidine 83. Isopentenyl diphosphate is bound by residues histidine 50 and histidine 83. Cysteine 105 contributes to the [4Fe-4S] cluster binding site. Histidine 133 contributes to the (2E)-4-hydroxy-3-methylbut-2-enyl diphosphate binding site. Residue histidine 133 participates in dimethylallyl diphosphate binding. Histidine 133 is a binding site for isopentenyl diphosphate. Glutamate 135 (proton donor) is an active-site residue. Threonine 173 provides a ligand contact to (2E)-4-hydroxy-3-methylbut-2-enyl diphosphate. Cysteine 202 contacts [4Fe-4S] cluster. Serine 230, asparagine 232, and serine 274 together coordinate (2E)-4-hydroxy-3-methylbut-2-enyl diphosphate. The dimethylallyl diphosphate site is built by serine 230, asparagine 232, and serine 274. Isopentenyl diphosphate-binding residues include serine 230, asparagine 232, and serine 274.

The protein belongs to the IspH family. Requires [4Fe-4S] cluster as cofactor.

It catalyses the reaction isopentenyl diphosphate + 2 oxidized [2Fe-2S]-[ferredoxin] + H2O = (2E)-4-hydroxy-3-methylbut-2-enyl diphosphate + 2 reduced [2Fe-2S]-[ferredoxin] + 2 H(+). It carries out the reaction dimethylallyl diphosphate + 2 oxidized [2Fe-2S]-[ferredoxin] + H2O = (2E)-4-hydroxy-3-methylbut-2-enyl diphosphate + 2 reduced [2Fe-2S]-[ferredoxin] + 2 H(+). Its pathway is isoprenoid biosynthesis; dimethylallyl diphosphate biosynthesis; dimethylallyl diphosphate from (2E)-4-hydroxy-3-methylbutenyl diphosphate: step 1/1. The protein operates within isoprenoid biosynthesis; isopentenyl diphosphate biosynthesis via DXP pathway; isopentenyl diphosphate from 1-deoxy-D-xylulose 5-phosphate: step 6/6. Its function is as follows. Catalyzes the conversion of 1-hydroxy-2-methyl-2-(E)-butenyl 4-diphosphate (HMBPP) into a mixture of isopentenyl diphosphate (IPP) and dimethylallyl diphosphate (DMAPP). Acts in the terminal step of the DOXP/MEP pathway for isoprenoid precursor biosynthesis. In Nitratidesulfovibrio vulgaris (strain DP4) (Desulfovibrio vulgaris), this protein is 4-hydroxy-3-methylbut-2-enyl diphosphate reductase.